Reading from the N-terminus, the 113-residue chain is U11-theraphotoxin-Hhn1d (113 aa).

The N-terminal stretch at methionine 1–alanine 21 is a signal peptide. Positions aspartate 22 to arginine 74 are excised as a propeptide. Disulfide bonds link cysteine 75–cysteine 90, cysteine 82–cysteine 95, and cysteine 89–cysteine 110.

The protein belongs to the neurotoxin 14 (magi-1) family. 01 (HNTX-16) subfamily. As to expression, expressed by the venom gland.

It localises to the secreted. In terms of biological role, probable ion channel inhibitor. The sequence is that of U11-theraphotoxin-Hhn1d from Cyriopagopus hainanus (Chinese bird spider).